Consider the following 159-residue polypeptide: SsrA-binding protein (159 aa).

A compositionally biased stretch (basic and acidic residues) spans 131–148 (YDKRQTLREKQDRREAER). Residues 131–159 (YDKRQTLREKQDRREAERTISAIKRKQRA) are disordered.

It belongs to the SmpB family.

It localises to the cytoplasm. Functionally, required for rescue of stalled ribosomes mediated by trans-translation. Binds to transfer-messenger RNA (tmRNA), required for stable association of tmRNA with ribosomes. tmRNA and SmpB together mimic tRNA shape, replacing the anticodon stem-loop with SmpB. tmRNA is encoded by the ssrA gene; the 2 termini fold to resemble tRNA(Ala) and it encodes a 'tag peptide', a short internal open reading frame. During trans-translation Ala-aminoacylated tmRNA acts like a tRNA, entering the A-site of stalled ribosomes, displacing the stalled mRNA. The ribosome then switches to translate the ORF on the tmRNA; the nascent peptide is terminated with the 'tag peptide' encoded by the tmRNA and targeted for degradation. The ribosome is freed to recommence translation, which seems to be the essential function of trans-translation. In Streptomyces coelicolor (strain ATCC BAA-471 / A3(2) / M145), this protein is SsrA-binding protein.